The sequence spans 876 residues: ATPase WRNIP1 (876 aa).

Composition is skewed to low complexity over residues 56–85 (NKSNGNNSINNNNNNKNTPTKPNLNLTPTK) and 104–175 (NNNN…INNN). Residues 56 to 175 (NKSNGNNSIN…NNNNNNINNN (120 aa)) form a disordered region. 240–246 (PGCGKTT) is an ATP binding site. 3 disordered regions span residues 621-647 (KDRQQSQDQTQRSSQQQQQQQTQPQQQ), 714-737 (INNKNNDSNIIKKNVNNSLDLNPT), and 833-876 (ETKA…SLDF). 2 stretches are compositionally biased toward low complexity: residues 626–647 (SQDQTQRSSQQQQQQQTQPQQQ) and 714–731 (INNKNNDSNIIKKNVNNS). Polar residues predominate over residues 835-849 (KAISSTDTKESVSIN). The segment covering 850–863 (DSDKDLTTTHKNEQ) has biased composition (basic and acidic residues).

Belongs to the AAA ATPase family. RarA/MGS1/WRNIP1 subfamily.

The protein resides in the nucleus. The catalysed reaction is ATP + H2O = ADP + phosphate + H(+). Its function is as follows. Functions as a modulator for initiation or reinitiation events during DNA polymerase delta-mediated DNA synthesis. Has an intrinsic ATPase activity that functions as a sensor of DNA damage or of arrested replication forks and regulates the extent of DNA synthesis. This Dictyostelium discoideum (Social amoeba) protein is ATPase WRNIP1.